The following is a 409-amino-acid chain: Inactive serine protease 35 (409 aa).

The first 17 residues, 1-17, serve as a signal peptide directing secretion; the sequence is MLLWLIFFTPGWTLIDG. Residues asparagine 87 and asparagine 107 are each glycosylated (N-linked (GlcNAc...) asparagine). The Peptidase S1 domain maps to 120–404; that stretch reads VYGTDSRFSI…ICLWIHGNDA (285 aa). Cysteine 150 and cysteine 166 are joined by a disulfide. Basic residues predominate over residues 188-203; sequence RNKSGGKKRRGSKRSR. The interval 188–246 is disordered; the sequence is RNKSGGKKRRGSKRSRRETSGGDQREGPREHLQDRVKAGRRRKQSGGGQRVSEGRPSFR. Positions 204–224 are enriched in basic and acidic residues; sequence RETSGGDQREGPREHLQDRVK.

It belongs to the peptidase S1 family.

It is found in the secreted. This Macaca mulatta (Rhesus macaque) protein is Inactive serine protease 35 (PRSS35).